Consider the following 128-residue polypeptide: Glycine cleavage system H protein (128 aa).

A Lipoyl-binding domain is found at 23-105 (VATVGISDHA…YEGGWLFKVQ (83 aa)). Position 64 is an N6-lipoyllysine (lysine 64).

Belongs to the GcvH family. In terms of assembly, the glycine cleavage system is composed of four proteins: P, T, L and H. (R)-lipoate is required as a cofactor.

Its function is as follows. The glycine cleavage system catalyzes the degradation of glycine. The H protein shuttles the methylamine group of glycine from the P protein to the T protein. The chain is Glycine cleavage system H protein from Alcanivorax borkumensis (strain ATCC 700651 / DSM 11573 / NCIMB 13689 / SK2).